Reading from the N-terminus, the 227-residue chain is MYDKLPLELWVKITNYSQEFGLLLTNKNFFELLYLMKFETNIIEYVVENNLLDILRHIIFLKNINHPIIMENIIDIRCLEESLNASCKNGKLEIVKLLVDLGANIFHNENCAMMLASEYGHIEIVEYLVSKGSDVRADNDYAVIYASKNGHLEIVKYLVSQGCDVRSCDSYAVRLASEYGHLEIVKFLVKKGANYRALNHHAVIEASKNKHYEIVEFLMNYSTGITK.

ANK repeat units follow at residues 38-66, 78-107, 108-137, 139-167, 168-197, and 199-227; these read FETN…NINH, CLEE…NIFH, NENC…DVRA, NDYA…DVRS, CDSY…NYRA, and NHHA…GITK.

The sequence is that of Putative ankyrin repeat protein L45 from Acanthamoeba polyphaga mimivirus (APMV).